The primary structure comprises 175 residues: Translation initiation factor IF-3 (175 aa).

This sequence belongs to the IF-3 family. As to quaternary structure, monomer.

Its subcellular location is the cytoplasm. Functionally, IF-3 binds to the 30S ribosomal subunit and shifts the equilibrium between 70S ribosomes and their 50S and 30S subunits in favor of the free subunits, thus enhancing the availability of 30S subunits on which protein synthesis initiation begins. The polypeptide is Translation initiation factor IF-3 (Staphylococcus aureus (strain USA300)).